A 360-amino-acid polypeptide reads, in one-letter code: MIIFATEVQTINSFVRLESFKEVYGLIWGFLPIFSLVVGIVTGVLVLVWLEREISARIQQRIGPEYAGALGILQALADGIKLLFKENLRPSRGNTTLFSIGPSLAVISILLSYSVIPFSNHLVLADFNIGIFLWIAISSIAPIGLLMSGYGSNNKYSFLGGLRAAAQSISYEIPLTLCLLSISLLSNSLSTVDIVEAQSKYGFWGWNLWRQPIGFIIFLISSLAECERLPFDLPEAEEELVAGYQTEYSGIKFGLFYVASYLNLLISSLFVTVLYLGGWNISLPYISSLELFERDPIFGTTIGIFITLAKTYLFLFISITTRWTLLRLRMDQLLNFGWKFLLPISLGNLLLTTSFQVFSL.

8 helical membrane-spanning segments follow: residues 30 to 50 (FLPIFSLVVGIVTGVLVLVWL), 98 to 118 (FSIGPSLAVISILLSYSVIPF), 127 to 147 (FNIGIFLWIAISSIAPIGLLM), 165 to 185 (AAQSISYEIPLTLCLLSISLL), 203 to 223 (FWGWNLWRQPIGFIIFLISSL), 253 to 273 (FGLFYVASYLNLLISSLFVTV), 297 to 317 (IFGTTIGIFITLAKTYLFLFI), and 340 to 360 (FLLPISLGNLLLTTSFQVFSL).

The protein belongs to the complex I subunit 1 family. As to quaternary structure, NDH is composed of at least 16 different subunits, 5 of which are encoded in the nucleus.

It is found in the plastid. The protein resides in the chloroplast thylakoid membrane. The enzyme catalyses a plastoquinone + NADH + (n+1) H(+)(in) = a plastoquinol + NAD(+) + n H(+)(out). It catalyses the reaction a plastoquinone + NADPH + (n+1) H(+)(in) = a plastoquinol + NADP(+) + n H(+)(out). In terms of biological role, NDH shuttles electrons from NAD(P)H:plastoquinone, via FMN and iron-sulfur (Fe-S) centers, to quinones in the photosynthetic chain and possibly in a chloroplast respiratory chain. The immediate electron acceptor for the enzyme in this species is believed to be plastoquinone. Couples the redox reaction to proton translocation, and thus conserves the redox energy in a proton gradient. In Aethionema cordifolium (Lebanon stonecress), this protein is NAD(P)H-quinone oxidoreductase subunit 1, chloroplastic.